Consider the following 415-residue polypeptide: Serine hydroxymethyltransferase (415 aa).

Residues leucine 117 and 121–123 each bind (6S)-5,6,7,8-tetrahydrofolate; that span reads GHL. Residue lysine 225 is modified to N6-(pyridoxal phosphate)lysine. (6S)-5,6,7,8-tetrahydrofolate contacts are provided by residues glutamate 241 and 349–351; that span reads SPF.

This sequence belongs to the SHMT family. In terms of assembly, homodimer. It depends on pyridoxal 5'-phosphate as a cofactor.

It is found in the cytoplasm. It catalyses the reaction (6R)-5,10-methylene-5,6,7,8-tetrahydrofolate + glycine + H2O = (6S)-5,6,7,8-tetrahydrofolate + L-serine. It functions in the pathway one-carbon metabolism; tetrahydrofolate interconversion. Its pathway is amino-acid biosynthesis; glycine biosynthesis; glycine from L-serine: step 1/1. Functionally, catalyzes the reversible interconversion of serine and glycine with tetrahydrofolate (THF) serving as the one-carbon carrier. This reaction serves as the major source of one-carbon groups required for the biosynthesis of purines, thymidylate, methionine, and other important biomolecules. Also exhibits THF-independent aldolase activity toward beta-hydroxyamino acids, producing glycine and aldehydes, via a retro-aldol mechanism. In Campylobacter hominis (strain ATCC BAA-381 / DSM 21671 / CCUG 45161 / LMG 19568 / NCTC 13146 / CH001A), this protein is Serine hydroxymethyltransferase.